The primary structure comprises 236 residues: Pyridoxine 5'-phosphate synthase (236 aa).

Asn6 is a 3-amino-2-oxopropyl phosphate binding site. 8–9 (DH) serves as a coordination point for 1-deoxy-D-xylulose 5-phosphate. Position 17 (Arg17) interacts with 3-amino-2-oxopropyl phosphate. His42 functions as the Proton acceptor in the catalytic mechanism. 1-deoxy-D-xylulose 5-phosphate-binding residues include Arg44 and His49. Glu69 acts as the Proton acceptor in catalysis. Thr99 contributes to the 1-deoxy-D-xylulose 5-phosphate binding site. His190 functions as the Proton donor in the catalytic mechanism. 3-amino-2-oxopropyl phosphate contacts are provided by residues Gly191 and 212–213 (GH).

This sequence belongs to the PNP synthase family. As to quaternary structure, homooctamer; tetramer of dimers.

The protein resides in the cytoplasm. It carries out the reaction 3-amino-2-oxopropyl phosphate + 1-deoxy-D-xylulose 5-phosphate = pyridoxine 5'-phosphate + phosphate + 2 H2O + H(+). Its pathway is cofactor biosynthesis; pyridoxine 5'-phosphate biosynthesis; pyridoxine 5'-phosphate from D-erythrose 4-phosphate: step 5/5. Catalyzes the complicated ring closure reaction between the two acyclic compounds 1-deoxy-D-xylulose-5-phosphate (DXP) and 3-amino-2-oxopropyl phosphate (1-amino-acetone-3-phosphate or AAP) to form pyridoxine 5'-phosphate (PNP) and inorganic phosphate. In Prosthecochloris aestuarii (strain DSM 271 / SK 413), this protein is Pyridoxine 5'-phosphate synthase.